The primary structure comprises 264 residues: Isoprenyl transferase (264 aa).

D43 is an active-site residue. Residue D43 coordinates Mg(2+). Residues 44 to 47 (GNGR), W48, R56, H60, and 88 to 90 (STE) contribute to the substrate site. The Proton acceptor role is filled by N91. Residues W92, R94, R211, and 217–219 (RTS) each bind substrate. E230 serves as a coordination point for Mg(2+).

The protein belongs to the UPP synthase family. Homodimer. Mg(2+) serves as cofactor.

Functionally, catalyzes the condensation of isopentenyl diphosphate (IPP) with allylic pyrophosphates generating different type of terpenoids. This chain is Isoprenyl transferase, found in Bifidobacterium longum (strain NCC 2705).